The chain runs to 246 residues: Pyridoxine 5'-phosphate synthase (246 aa).

Asn12 lines the 3-amino-2-oxopropyl phosphate pocket. 14-15 (DH) lines the 1-deoxy-D-xylulose 5-phosphate pocket. Arg23 provides a ligand contact to 3-amino-2-oxopropyl phosphate. His48 acts as the Proton acceptor in catalysis. Residues Arg50 and His55 each coordinate 1-deoxy-D-xylulose 5-phosphate. The Proton acceptor role is filled by Glu75. Thr105 lines the 1-deoxy-D-xylulose 5-phosphate pocket. The active-site Proton donor is the His196. 3-amino-2-oxopropyl phosphate contacts are provided by residues Gly197 and 218 to 219 (GH).

This sequence belongs to the PNP synthase family. Homooctamer; tetramer of dimers.

Its subcellular location is the cytoplasm. The catalysed reaction is 3-amino-2-oxopropyl phosphate + 1-deoxy-D-xylulose 5-phosphate = pyridoxine 5'-phosphate + phosphate + 2 H2O + H(+). Its pathway is cofactor biosynthesis; pyridoxine 5'-phosphate biosynthesis; pyridoxine 5'-phosphate from D-erythrose 4-phosphate: step 5/5. In terms of biological role, catalyzes the complicated ring closure reaction between the two acyclic compounds 1-deoxy-D-xylulose-5-phosphate (DXP) and 3-amino-2-oxopropyl phosphate (1-amino-acetone-3-phosphate or AAP) to form pyridoxine 5'-phosphate (PNP) and inorganic phosphate. The sequence is that of Pyridoxine 5'-phosphate synthase from Pseudomonas savastanoi pv. phaseolicola (strain 1448A / Race 6) (Pseudomonas syringae pv. phaseolicola (strain 1448A / Race 6)).